A 135-amino-acid chain; its full sequence is Ribosome-binding factor A (135 aa).

This sequence belongs to the RbfA family. In terms of assembly, monomer. Binds 30S ribosomal subunits, but not 50S ribosomal subunits or 70S ribosomes.

Its subcellular location is the cytoplasm. In terms of biological role, one of several proteins that assist in the late maturation steps of the functional core of the 30S ribosomal subunit. Associates with free 30S ribosomal subunits (but not with 30S subunits that are part of 70S ribosomes or polysomes). Required for efficient processing of 16S rRNA. May interact with the 5'-terminal helix region of 16S rRNA. The polypeptide is Ribosome-binding factor A (Bartonella quintana (strain Toulouse) (Rochalimaea quintana)).